The primary structure comprises 241 residues: Uridylate kinase (241 aa).

12–15 (KLSG) contributes to the ATP binding site. Residue Gly-54 coordinates UMP. Positions 55 and 59 each coordinate ATP. Residues Asp-74 and 135–142 (TGNPFFTT) contribute to the UMP site. Positions 162, 168, and 171 each coordinate ATP.

The protein belongs to the UMP kinase family. As to quaternary structure, homohexamer.

It is found in the cytoplasm. It carries out the reaction UMP + ATP = UDP + ADP. It functions in the pathway pyrimidine metabolism; CTP biosynthesis via de novo pathway; UDP from UMP (UMPK route): step 1/1. With respect to regulation, inhibited by UTP. Its function is as follows. Catalyzes the reversible phosphorylation of UMP to UDP. This is Uridylate kinase from Magnetococcus marinus (strain ATCC BAA-1437 / JCM 17883 / MC-1).